We begin with the raw amino-acid sequence, 120 residues long: Large ribosomal subunit protein bL19 (120 aa).

The protein belongs to the bacterial ribosomal protein bL19 family.

Its function is as follows. This protein is located at the 30S-50S ribosomal subunit interface and may play a role in the structure and function of the aminoacyl-tRNA binding site. This Geobacillus kaustophilus (strain HTA426) protein is Large ribosomal subunit protein bL19.